Consider the following 466-residue polypeptide: MNGGTFTPGKEKERAGIYFNFKTTAENRVSAGERGTVALPIASSWGEVKKFISISSIEDLNKKVGLNIDDPSLLLLREAMKKANTVLLYRLTEGLRASADISEGVKATALYGGTKGNDIIISITENVIDSSKVDVTTYLDQSEVDKQTVSKAEELKPNKYVTFTGKGDLTVTIPLTGTAPEDVSGALPATSGIRLSGGTDKTPTNADYTAFLEAAETEYFDTIALPVEDNEQLKATFVAFIKRLRDNQGQKVQGVLSNYKGDHEGIINVTGGVLLEDGTEITPEKATAWVAGASAGATFNQSLTFVEYEGAVDVLNRIDNDEIVERLSNGEFLFTYDSRDKSVSVEKDINSLTSLTAEKNKMFQKNKIVRVLDAINNDLTSQLKALIKSRKASGSDVPATNDGLQFVKTLITQYLSVLQDNEGITDFDSENDITIALNNDRDGFLIDLAVQPVDAAEKFYFNVEVK.

This sequence belongs to the myoviridae tail sheath protein family.

This is an uncharacterized protein from Bacillus subtilis (strain 168).